The following is a 165-amino-acid chain: uncharacterized protein (165 aa).

The helical transmembrane segment at 15–35 (MSPAIILIGVLILIVLFVIKF) threads the bilayer. Residues 67-119 (ISQLNTLRATLAAKKKELKTLRTARKKECTEQLAKTQAEVDRIQAKIDNFSSR) adopt a coiled-coil conformation. A disordered region spans residues 123–156 (VPLPGGEVGPPYNPPPPRTNTRPNPRPNPRPAQL). A compositionally biased stretch (pro residues) spans 133-154 (PYNPPPPRTNTRPNPRPNPRPA).

The protein resides in the membrane. This is an uncharacterized protein from Acheta domesticus (House cricket).